The following is a 426-amino-acid chain: Serine--tRNA ligase (426 aa).

T233 to E235 lines the L-serine pocket. Position 264 to 266 (R264 to E266) interacts with ATP. E287 is a binding site for L-serine. Residue E351–S354 participates in ATP binding. S387 is a binding site for L-serine.

It belongs to the class-II aminoacyl-tRNA synthetase family. Type-1 seryl-tRNA synthetase subfamily. Homodimer. The tRNA molecule binds across the dimer.

The protein resides in the cytoplasm. The catalysed reaction is tRNA(Ser) + L-serine + ATP = L-seryl-tRNA(Ser) + AMP + diphosphate + H(+). The enzyme catalyses tRNA(Sec) + L-serine + ATP = L-seryl-tRNA(Sec) + AMP + diphosphate + H(+). Its pathway is aminoacyl-tRNA biosynthesis; selenocysteinyl-tRNA(Sec) biosynthesis; L-seryl-tRNA(Sec) from L-serine and tRNA(Sec): step 1/1. Its function is as follows. Catalyzes the attachment of serine to tRNA(Ser). Is also able to aminoacylate tRNA(Sec) with serine, to form the misacylated tRNA L-seryl-tRNA(Sec), which will be further converted into selenocysteinyl-tRNA(Sec). The chain is Serine--tRNA ligase from Clostridium botulinum (strain Kyoto / Type A2).